A 1538-amino-acid polypeptide reads, in one-letter code: Ferredoxin-dependent glutamate synthase (1538 aa).

Cysteine 34 serves as the catalytic For GATase activity. Residues 34 to 431 (CGVGFIADVN…PGQMISVDIF (398 aa)) enclose the Glutamine amidotransferase type-2 domain. An FMN-binding site is contributed by 1109–1166 (LSEVHQLLAENQLRDRVTLRVDGGLRTGSDIVLAAIMGAEEFGFGTVAMIATGCIMAR). [3Fe-4S] cluster is bound by residues cysteine 1162, cysteine 1168, and cysteine 1173.

This sequence belongs to the glutamate synthase family. As to quaternary structure, monomer. The cofactor is [3Fe-4S] cluster. It depends on FAD as a cofactor. Requires FMN as cofactor.

It localises to the plastid. The protein resides in the chloroplast stroma. It carries out the reaction 2 oxidized [2Fe-2S]-[ferredoxin] + 2 L-glutamate = L-glutamine + 2 reduced [2Fe-2S]-[ferredoxin] + 2-oxoglutarate + 2 H(+). Its pathway is amino-acid biosynthesis; L-glutamate biosynthesis via GLT pathway; L-glutamate from 2-oxoglutarate and L-glutamine (ferredoxin route): step 1/1. It functions in the pathway energy metabolism; nitrogen metabolism. The sequence is that of Ferredoxin-dependent glutamate synthase (gltB) from Pyropia yezoensis (Susabi-nori).